Here is a 491-residue protein sequence, read N- to C-terminus: (1S)-1-hydroxy-luvungin A synthase CYP88A37 (491 aa).

Residues 5–25 (FSWLILALAIFIGTYAFVFGV) traverse the membrane as a helical segment. Cys439 serves as a coordination point for heme.

It belongs to the cytochrome P450 family. Heme serves as cofactor. Expressed in maturing fruits and in juice vesicles.

It is found in the membrane. It carries out the reaction luvungin A + reduced [NADPH--hemoprotein reductase] + O2 = (1S)-1-hydroxy-luvungin A + oxidized [NADPH--hemoprotein reductase] + H2O + H(+). It functions in the pathway secondary metabolite biosynthesis; terpenoid biosynthesis. Functionally, monooxygenase involved in the biosynthesis of limonoids triterpene natural products such as limonin, a compound with insecticidal activity responsible for the bitter taste in citrus. Catalyzes the conversion of luvungin A to (1S)-1-hydroxy-luvungin A. In Citrus sinensis (Sweet orange), this protein is (1S)-1-hydroxy-luvungin A synthase CYP88A37.